The chain runs to 189 residues: ATP synthase subunit delta (189 aa).

The protein belongs to the ATPase delta chain family. As to quaternary structure, F-type ATPases have 2 components, F(1) - the catalytic core - and F(0) - the membrane proton channel. F(1) has five subunits: alpha(3), beta(3), gamma(1), delta(1), epsilon(1). F(0) has three main subunits: a(1), b(2) and c(10-14). The alpha and beta chains form an alternating ring which encloses part of the gamma chain. F(1) is attached to F(0) by a central stalk formed by the gamma and epsilon chains, while a peripheral stalk is formed by the delta and b chains.

It localises to the cell inner membrane. F(1)F(0) ATP synthase produces ATP from ADP in the presence of a proton or sodium gradient. F-type ATPases consist of two structural domains, F(1) containing the extramembraneous catalytic core and F(0) containing the membrane proton channel, linked together by a central stalk and a peripheral stalk. During catalysis, ATP synthesis in the catalytic domain of F(1) is coupled via a rotary mechanism of the central stalk subunits to proton translocation. Its function is as follows. This protein is part of the stalk that links CF(0) to CF(1). It either transmits conformational changes from CF(0) to CF(1) or is implicated in proton conduction. This chain is ATP synthase subunit delta, found in Rickettsia bellii (strain OSU 85-389).